The primary structure comprises 596 residues: Succinate dehydrogenase flavoprotein subunit (596 aa).

Residues 18-23 (GAGGAG), 41-56 (SKLF…AQGG), and Asp-225 contribute to the FAD site. His-49 carries the post-translational modification Tele-8alpha-FAD histidine. Substrate is bound by residues His-246 and Thr-258. Arg-290 functions as the Proton acceptor in the catalytic mechanism. Position 357 (His-357) interacts with substrate. Glu-391 serves as a coordination point for FAD. Position 402 (Arg-402) interacts with substrate. 407–408 (SL) provides a ligand contact to FAD.

This sequence belongs to the FAD-dependent oxidoreductase 2 family. FRD/SDH subfamily. As to quaternary structure, part of an enzyme complex containing four subunits: a flavoprotein, an iron-sulfur, cytochrome b-556, and a hydrophobic anchor protein. The cofactor is FAD.

The protein resides in the cell inner membrane. The catalysed reaction is a quinone + succinate = fumarate + a quinol. It functions in the pathway carbohydrate metabolism; tricarboxylic acid cycle; fumarate from succinate (bacterial route): step 1/1. This is Succinate dehydrogenase flavoprotein subunit (sdhA) from Rickettsia bellii (strain RML369-C).